We begin with the raw amino-acid sequence, 400 residues long: Argininosuccinate synthase (400 aa).

ATP is bound by residues 10–18 and Ala38; that span reads AYSGGVDTS. Tyr89 contacts L-citrulline. Gly119 contacts ATP. Residues Thr121, Asn125, and Asp126 each coordinate L-aspartate. Asn125 provides a ligand contact to L-citrulline. L-citrulline contacts are provided by Arg129, Ser177, Glu262, and Tyr274.

It belongs to the argininosuccinate synthase family. Type 1 subfamily. Homotetramer.

The protein localises to the cytoplasm. It carries out the reaction L-citrulline + L-aspartate + ATP = 2-(N(omega)-L-arginino)succinate + AMP + diphosphate + H(+). Its pathway is amino-acid biosynthesis; L-arginine biosynthesis; L-arginine from L-ornithine and carbamoyl phosphate: step 2/3. The polypeptide is Argininosuccinate synthase (Trichodesmium erythraeum (strain IMS101)).